Consider the following 215-residue polypeptide: Pyridoxine/pyridoxamine 5'-phosphate oxidase (215 aa).

Substrate-binding positions include 9–12 (RRDY) and Lys69. Residues 64 to 69 (RVLLLK), 79 to 80 (FT), Lys86, and Gln108 each bind FMN. Substrate-binding residues include Tyr126, Arg130, and Ser134. FMN is bound by residues 143–144 (QS) and Trp188. Residue 194–196 (RLH) participates in substrate binding. Arg198 is an FMN binding site.

It belongs to the pyridoxamine 5'-phosphate oxidase family. In terms of assembly, homodimer. Requires FMN as cofactor.

It carries out the reaction pyridoxamine 5'-phosphate + O2 + H2O = pyridoxal 5'-phosphate + H2O2 + NH4(+). The enzyme catalyses pyridoxine 5'-phosphate + O2 = pyridoxal 5'-phosphate + H2O2. Its pathway is cofactor metabolism; pyridoxal 5'-phosphate salvage; pyridoxal 5'-phosphate from pyridoxamine 5'-phosphate: step 1/1. It functions in the pathway cofactor metabolism; pyridoxal 5'-phosphate salvage; pyridoxal 5'-phosphate from pyridoxine 5'-phosphate: step 1/1. In terms of biological role, catalyzes the oxidation of either pyridoxine 5'-phosphate (PNP) or pyridoxamine 5'-phosphate (PMP) into pyridoxal 5'-phosphate (PLP). The chain is Pyridoxine/pyridoxamine 5'-phosphate oxidase from Pseudomonas savastanoi pv. phaseolicola (strain 1448A / Race 6) (Pseudomonas syringae pv. phaseolicola (strain 1448A / Race 6)).